Reading from the N-terminus, the 248-residue chain is DNA repair protein RecO (248 aa).

This sequence belongs to the RecO family.

Involved in DNA repair and RecF pathway recombination. The chain is DNA repair protein RecO from Oleidesulfovibrio alaskensis (strain ATCC BAA-1058 / DSM 17464 / G20) (Desulfovibrio alaskensis).